A 172-amino-acid polypeptide reads, in one-letter code: 3-hydroxydecanoyl-[acyl-carrier-protein] dehydratase (172 aa).

The active site involves histidine 71.

Belongs to the thioester dehydratase family. FabA subfamily. In terms of assembly, homodimer.

The protein localises to the cytoplasm. The enzyme catalyses a (3R)-hydroxyacyl-[ACP] = a (2E)-enoyl-[ACP] + H2O. It catalyses the reaction (3R)-hydroxydecanoyl-[ACP] = (2E)-decenoyl-[ACP] + H2O. The catalysed reaction is (2E)-decenoyl-[ACP] = (3Z)-decenoyl-[ACP]. It participates in lipid metabolism; fatty acid biosynthesis. In terms of biological role, necessary for the introduction of cis unsaturation into fatty acids. Catalyzes the dehydration of (3R)-3-hydroxydecanoyl-ACP to E-(2)-decenoyl-ACP and then its isomerization to Z-(3)-decenoyl-ACP. Can catalyze the dehydratase reaction for beta-hydroxyacyl-ACPs with saturated chain lengths up to 16:0, being most active on intermediate chain length. The chain is 3-hydroxydecanoyl-[acyl-carrier-protein] dehydratase from Photorhabdus laumondii subsp. laumondii (strain DSM 15139 / CIP 105565 / TT01) (Photorhabdus luminescens subsp. laumondii).